Consider the following 432-residue polypeptide: Putative D-alanyl-D-alanine carboxypeptidase (432 aa).

The helical; Signal-anchor transmembrane segment at 7–25 (ATVLLTFSLSAFAVEYPVL) threads the bilayer.

Belongs to the peptidase S12 family. YfeW subfamily.

Its subcellular location is the cell inner membrane. It catalyses the reaction Preferential cleavage: (Ac)2-L-Lys-D-Ala-|-D-Ala. Also transpeptidation of peptidyl-alanyl moieties that are N-acyl substituents of D-alanine.. The sequence is that of Putative D-alanyl-D-alanine carboxypeptidase from Salmonella heidelberg (strain SL476).